Consider the following 389-residue polypeptide: Meiosis-specific protein MEI4 (389 aa).

The interaction with REC114 stretch occupies residues M1 to D127.

It belongs to the MEI4L family. Part of the MCD recombinosome complex, at least composed of IHO1, REC114 and MEI4. Forms a complex with REC114; the interaction is required for MEI4 stability. Interacts (via N-terminal domain) with REC114 (via C-terminal domain). Interacts with IHO1. As to expression, expressed in adult testis and brain and in embryonic ovary.

The protein localises to the chromosome. In terms of biological role, required for DNA double-strand breaks (DSBs) formation in unsynapsed regions during meiotic recombination. Probably acts by forming a complex with IHO1 and REC114, which activates DSBs formation in unsynapsed regions, an essential step to ensure completion of synapsis. The polypeptide is Meiosis-specific protein MEI4 (Mus musculus (Mouse)).